Here is a 253-residue protein sequence, read N- to C-terminus: Probable transcriptional regulatory protein AM1_1847 (253 aa).

This sequence belongs to the TACO1 family.

The protein localises to the cytoplasm. In Acaryochloris marina (strain MBIC 11017), this protein is Probable transcriptional regulatory protein AM1_1847.